A 708-amino-acid chain; its full sequence is Leucine-rich repeat neuronal protein 3 (708 aa).

The first 22 residues, 1 to 22 (MKDMPLQIHVLLGLAITTLVQA), serve as a signal peptide directing secretion. In terms of domain architecture, LRRNT spans 23–69 (VDKKVDCPQLCTCEIRPWFTPTSIYMEASTVDCNDLGLLTFPARLPA). Topologically, residues 23 to 628 (VDKKVDCPQL…KEYEKSNTTT (606 aa)) are extracellular. 12 LRR repeats span residues 70 to 91 (NTQI…TDFP), 93 to 114 (NLTG…NVKK), 117 to 138 (QLLS…CLSE), 141 to 162 (NLQE…AFIG), 165 to 186 (NLLR…WFDA), 189 to 210 (NLEI…NFKP), 213 to 234 (NLRS…ALVG), 237 to 258 (NLES…ALQK), 261 to 282 (NLKF…DFSN), 285 to 304 (HLKE…DSLA), 310 to 332 (DLRK…AFFR), and 335 to 358 (KLES…ESLP). N-linked (GlcNAc...) asparagine glycans are attached at residues Asn-93 and Asn-103. A glycan (N-linked (GlcNAc...) asparagine) is linked at Asn-223. One can recognise an LRRCT domain in the interval 368–421 (NPIRCDCVIRWINMNKTNIRFMEPDSLFCVDPPEFQGQNVRQVHFRDMMEICLP). N-linked (GlcNAc...) asparagine glycosylation occurs at Asn-382. Residues 421–514 (PLIAPESFPS…DLKSVMIKVD (94 aa)) enclose the Ig-like C2-type domain. A disulfide bridge links Cys-444 with Cys-496. Residues Asn-522, Asn-579, Asn-608, and Asn-625 are each glycosylated (N-linked (GlcNAc...) asparagine). One can recognise a Fibronectin type-III domain in the interval 523 to 617 (GSLNIKIRDI…NVTTKGLDPD (95 aa)). Residues 629 to 649 (LMACLGGLLGIIGVICLISCL) traverse the membrane as a helical segment. Topologically, residues 650-708 (SPEMNCDGGHSYVRNYLQKPTFALGELYPPLINLWEAGKEKSTSLKVKATVIGLPTNMS) are cytoplasmic.

It localises to the membrane. In Pongo abelii (Sumatran orangutan), this protein is Leucine-rich repeat neuronal protein 3 (LRRN3).